Consider the following 757-residue polypeptide: Myb-related protein A (757 aa).

3 consecutive HTH myb-type domains span residues 30–81 (KKIC…QKVL), 82–137 (NPEL…NPEV), and 138–188 (KKSS…RRKV). DNA-binding regions (H-T-H motif) lie at residues 58-81 (WAFIASHLQNRSDFQCQHRWQKVL), 110-133 (WSLIAKHLKGRIGKQCRERWHNHL), and 161-184 (WAEIAKLLPGRTDNSIKNHWNSTM). Residues 187-209 (KVEQEGYLQDGTKSSSERTGSST) form a disordered region. Residues 197–209 (GTKSSSERTGSST) show a composition bias toward polar residues. The transcriptional activation domain stretch occupies residues 235-300 (IPVYQYASPE…RLSSQAGSLP (66 aa)). Positions 303-558 (SGSFVMEDCV…IRRSLLGSTP (256 aa)) are negative regulatory domain.

As to quaternary structure, component of the DREAM complex. Expressed ubiquitously.

The protein localises to the nucleus. Its function is as follows. Strong transcriptional activator; DNA-binding protein that specifically recognize the sequence 5'-YAAC[GT]G-3'. Could have a role in the proliferation and/or differentiation of neurogenic, spermatogenic and B-lymphoid cells. The polypeptide is Myb-related protein A (MYBL1) (Gallus gallus (Chicken)).